The primary structure comprises 172 residues: uncharacterized protein (172 aa).

The 161-residue stretch at 12 to 172 (IRLRCMEDRD…IAVYERKSYN (161 aa)) folds into the N-acetyltransferase domain.

This is an uncharacterized protein from Bacillus subtilis (strain 168).